Here is a 223-residue protein sequence, read N- to C-terminus: Probable cytokinin riboside 5'-monophosphate phosphoribohydrolase LOGL1 (223 aa).

Substrate-binding positions include Glu89, 107-108, 124-130, and Thr136; these read RK and GYGTMEE. The interval 201–223 is disordered; it reads QEVAPRTSWEMSELGYGKTPEES.

The protein belongs to the LOG family. As to expression, expressed in shoot apex, immature inflorescences and flowers.

The enzyme catalyses N(6)-(dimethylallyl)adenosine 5'-phosphate + H2O = N(6)-dimethylallyladenine + D-ribose 5-phosphate. It carries out the reaction 9-ribosyl-trans-zeatin 5'-phosphate + H2O = trans-zeatin + D-ribose 5-phosphate. Cytokinin-activating enzyme working in the direct activation pathway. Phosphoribohydrolase that converts inactive cytokinin nucleotides to the biologically active free-base forms. This chain is Probable cytokinin riboside 5'-monophosphate phosphoribohydrolase LOGL1 (LOGL1), found in Oryza sativa subsp. japonica (Rice).